A 163-amino-acid polypeptide reads, in one-letter code: Peptidyl-prolyl cis-trans isomerase (163 aa).

One can recognise a PPIase cyclophilin-type domain in the interval 17 to 163 (KTAYATIKTN…IESVVFSSSL (147 aa)).

Belongs to the cyclophilin-type PPIase family.

The enzyme catalyses [protein]-peptidylproline (omega=180) = [protein]-peptidylproline (omega=0). PPIases accelerate the folding of proteins. It catalyzes the cis-trans isomerization of proline imidic peptide bonds in oligopeptides. The polypeptide is Peptidyl-prolyl cis-trans isomerase (ppiA) (Helicobacter pylori (strain ATCC 700392 / 26695) (Campylobacter pylori)).